Reading from the N-terminus, the 106-residue chain is L-rhamnose mutarotase (106 aa).

Tyr20 contributes to the substrate binding site. His24 functions as the Proton donor in the catalytic mechanism. Substrate is bound by residues Tyr43 and 78–79; that span reads WW.

It belongs to the rhamnose mutarotase family. Homodimer.

The protein resides in the cytoplasm. It carries out the reaction alpha-L-rhamnose = beta-L-rhamnose. The protein operates within carbohydrate metabolism; L-rhamnose metabolism. Its function is as follows. Involved in the anomeric conversion of L-rhamnose. This chain is L-rhamnose mutarotase, found in Rhizobium johnstonii (strain DSM 114642 / LMG 32736 / 3841) (Rhizobium leguminosarum bv. viciae).